Here is a 427-residue protein sequence, read N- to C-terminus: Serine hydroxymethyltransferase (427 aa).

(6S)-5,6,7,8-tetrahydrofolate-binding positions include leucine 122 and 126–128 (GHL). N6-(pyridoxal phosphate)lysine is present on lysine 231. (6S)-5,6,7,8-tetrahydrofolate contacts are provided by residues glutamate 247 and 355-357 (SPF).

Belongs to the SHMT family. In terms of assembly, homodimer. Requires pyridoxal 5'-phosphate as cofactor.

The protein localises to the cytoplasm. The catalysed reaction is (6R)-5,10-methylene-5,6,7,8-tetrahydrofolate + glycine + H2O = (6S)-5,6,7,8-tetrahydrofolate + L-serine. It participates in one-carbon metabolism; tetrahydrofolate interconversion. Its pathway is amino-acid biosynthesis; glycine biosynthesis; glycine from L-serine: step 1/1. Its function is as follows. Catalyzes the reversible interconversion of serine and glycine with tetrahydrofolate (THF) serving as the one-carbon carrier. This reaction serves as the major source of one-carbon groups required for the biosynthesis of purines, thymidylate, methionine, and other important biomolecules. Also exhibits THF-independent aldolase activity toward beta-hydroxyamino acids, producing glycine and aldehydes, via a retro-aldol mechanism. This is Serine hydroxymethyltransferase from Microcystis aeruginosa (strain NIES-843 / IAM M-2473).